We begin with the raw amino-acid sequence, 130 residues long: Large ribosomal subunit protein bL19 (130 aa).

Belongs to the bacterial ribosomal protein bL19 family.

Its function is as follows. This protein is located at the 30S-50S ribosomal subunit interface and may play a role in the structure and function of the aminoacyl-tRNA binding site. The protein is Large ribosomal subunit protein bL19 of Cupriavidus metallidurans (strain ATCC 43123 / DSM 2839 / NBRC 102507 / CH34) (Ralstonia metallidurans).